We begin with the raw amino-acid sequence, 77 residues long: MNPIVEFCVNNLASGADAAFAKLDADDSLDVIEYDCLTYCDLCATSLFALVDGEVVRGETADELVANIYTFLEENPF.

Belongs to the UPF0349 family.

The chain is UPF0349 protein lwe2340 from Listeria welshimeri serovar 6b (strain ATCC 35897 / DSM 20650 / CCUG 15529 / CIP 8149 / NCTC 11857 / SLCC 5334 / V8).